An 85-amino-acid chain; its full sequence is Protein MANBAL (85 aa).

Residues 24-44 (YGLFLGAIFQLICVLAIIVPI) form a helical membrane-spanning segment. Residues 49 to 64 (EAEAEQAEPRSAEGPK) are compositionally biased toward basic and acidic residues. Residues 49 to 85 (EAEAEQAEPRSAEGPKKPKAAIASTNKRPKKETKKKR) are disordered. Positions 75-85 (KRPKKETKKKR) are enriched in basic residues.

The protein belongs to the UPF0239 family.

The protein resides in the membrane. This chain is Protein MANBAL (Manbal), found in Mus musculus (Mouse).